The following is a 192-amino-acid chain: uncharacterized protein (192 aa).

An N-terminal signal peptide occupies residues 1-18 (MNSKFILKYFILAFFLVS). The N-palmitoyl cysteine moiety is linked to residue Cys-19. Cys-19 is lipidated: S-diacylglycerol cysteine.

Its subcellular location is the cell membrane. This is an uncharacterized protein from Borreliella burgdorferi (strain ATCC 35210 / DSM 4680 / CIP 102532 / B31) (Borrelia burgdorferi).